A 256-amino-acid polypeptide reads, in one-letter code: Chitinase 11 (256 aa).

A signal peptide spans 1-22; that stretch reads MRRLLPLAGATLLIAAAGGASG. 2 disulfides stabilise this stretch: Cys48–Cys109 and Cys214–Cys247. Glu91 functions as the Proton donor in the catalytic mechanism.

This sequence belongs to the glycosyl hydrolase 19 family. Chitinase class II subfamily. In terms of tissue distribution, expressed in leaves and at lower levels in roots, sheaths and meristems.

The enzyme catalyses Random endo-hydrolysis of N-acetyl-beta-D-glucosaminide (1-&gt;4)-beta-linkages in chitin and chitodextrins.. This chain is Chitinase 11 (Cht11), found in Oryza sativa subsp. japonica (Rice).